We begin with the raw amino-acid sequence, 4383 residues long: Replicase polyprotein 1a (4383 aa).

The CoV Nsp1 globular domain maps to 54 to 196; sequence PENHVMVDCR…PWVMYLRKRG (143 aa). Residues 216-246 form the BetaCoV Nsp1 C-terminal domain; the sequence is FKVEDAYDQVHDEPKGKFSKKAYALIRGYRG. Positions 250–514 constitute a CoV Nsp2 N-terminal domain; the sequence is LLYVDQYGCD…VKETNLICKA (265 aa). Zn(2+)-binding residues include Cys-392, Cys-397, Cys-413, and Cys-416. A C4 region spans residues 392–416; that stretch reads CEQDSCDFKGWIPGNMIDGFACTTC. Positions 524-713 constitute a CoV Nsp2 middle domain; it reads CGNLHQRELL…AQAFQSVAKV (190 aa). Residues 733 to 851 enclose the CoV Nsp2 C-terminal domain; that stretch reads RRRICLSGRK…LDQAWRVPCA (119 aa). The region spanning 853–966 is the Ubiquitin-like 1 domain; the sequence is RRVTFKEQPT…LYCAFTAPED (114 aa). The disordered stretch occupies residues 995 to 1025; the sequence is PCVASEQEESSEVLEDTLDDGPSVETSDSQV. The segment covering 1000 to 1013 has biased composition (acidic residues); the sequence is EQEESSEVLEDTLD. The Peptidase C16 1 domain occupies 1036–1274; it reads DLESVIQDYE…IAQLYGSCIT (239 aa). Residue Cys-1074 is the For PL1-PRO activity of the active site. Zn(2+)-binding residues include Cys-1151, Cys-1154, Cys-1177, and Cys-1179. A C4-type 1 zinc finger spans residues 1151–1179; that stretch reads CIKCDLALKLKGLDAMFFYGDVVSHICKC. Residues His-1225 and Asp-1236 each act as for PL1-PRO activity in the active site. A Macro domain is found at 1275 to 1435; sequence PNVCFVKGDI…LISKCQITAV (161 aa). The region spanning 1491–1563 is the DPUP domain; the sequence is DDARTFVQSN…VAQIKALFLD (73 aa). Residues 1562–1617 enclose the Ubiquitin-like 2 domain; it reads LDKVDILLTVDGVNFTNRFVPVGESFGKSLGNVFCDGVNVTKHKCDINYKGKVFFQ. One can recognise a Peptidase C16 2 domain in the interval 1631–1892; that stretch reads SSFNFDQKEL…KIEYKPDLSQ (262 aa). The active-site For PL2-PRO activity is the Cys-1671. Residues Cys-1749, Cys-1751, Cys-1783, and Cys-1785 each contribute to the Zn(2+) site. The segment at 1749–1785 adopts a C4-type 2 zinc-finger fold; sequence CKCGVKQEQRTGLDAVMHFGTLSREDLEIGYTVDCSC. Active-site for PL2-PRO activity residues include His-1828 and Asp-1842. The region spanning 1906 to 2007 is the Nucleic acid-binding domain; the sequence is IKAQFKTFEK…TYFNRPLLVD (102 aa). Residues 2020–2169 enclose the G2M domain; that stretch reads DDSGDSSESG…ADNKVIYTTE (150 aa). 3 helical membrane passes run 2138-2158, 2199-2219, and 2221-2241; these read TSACFNFIKWLFVLLFGWIKI, ACIIATIFLLWFNFIYANVIF, and DFYLPKIGFLPTFVGKIAQWI. Positions 2138–2385 are HD1; that stretch reads TSACFNFIKW…ASFIKLFSLF (248 aa). Positions 2235–2296 constitute a 3Ecto domain; sequence GKIAQWIKNT…AIDVVQYEAD (62 aa). 2 disulfide bridges follow: Cys-2251–Cys-2275 and Cys-2266–Cys-2272. 3 consecutive transmembrane segments (helical) span residues 2313-2333, 2343-2363, and 2365-2385; these read LIVSYALYTAWFYPLFALISI, LFMLSTLHWSFRLLVALANML, and AHVFMRFYIIIASFIKLFSLF. Residues 2383 to 2473 are Y1; it reads SLFKHVAYGC…ELKRPIQPTD (91 aa). Residues 2383–2750 form the CoV Nsp3 Y domain; the sequence is SLFKHVAYGC…LTTPFSLKGG (368 aa). Zn(2+) is bound by residues His-2387, Cys-2392, Cys-2397, Cys-2400, Cys-2433, His-2436, Cys-2440, and Cys-2443. The segment at 2387–2400 is ZF1; it reads HVAYGCSKSGCLFC. Residues 2433-2443 are ZF2; sequence CSKHQWNCIDC. Residues 2474–2566 are Y2; it reads VAYHTVTDVK…MVDKNLITTA (93 aa). The coV-Y stretch occupies residues 2474–2750; that stretch reads VAYHTVTDVK…LTTPFSLKGG (277 aa). The Y3 stretch occupies residues 2567–2649; that stretch reads NTGTSVTETM…DSVMSAVSAG (83 aa). The Y4 stretch occupies residues 2650 to 2750; sequence LELTDESCNN…LTTPFSLKGG (101 aa). The next 7 helical transmembrane spans lie at 2752 to 2772, 2824 to 2844, 3009 to 3029, 3031 to 3051, 3063 to 3083, 3090 to 3110, and 3115 to 3135; these read VFSYFVYVCFVLSLVCFIGLW, STFGLSYYSNSMACPIVVAVI, VFDLIYQLFKGLAQPVDFLAL, ASSIAGAILAVIVVLVFYYLI, VVFVNVIVWCVNFMMLFVFQV, VYAICYFYATLYFPSEISVIM, and LVMYGTIMPLWFCLLYIAVVV. The tract at residues 2752–3135 is HD2; that stretch reads VFSYFVYVCF…FCLLYIAVVV (384 aa). The Nsp4C domain maps to 3149–3246; sequence LGTSVRSDGT…TASVSTSFLQ (98 aa). The 303-residue stretch at 3247–3549 folds into the Peptidase C30 domain; sequence SGIVKMVNPT…YQQLAGIKLQ (303 aa). Active-site for 3CL-PRO activity residues include His-3287 and Cys-3391. An HD3 region spans residues 3319–3775; the sequence is LSLTVMSYQM…IISCYWGLFS (457 aa). The next 7 helical transmembrane spans lie at 3558–3578, 3588–3608, 3615–3635, 3657–3677, 3684–3704, 3711–3731, and 3755–3775; these read GTVCWIMASTFLFSCIITAFV, TNMFSITFCALCVISLAMLLV, LTMYITPVLFTLLYNNYLVVY, TYTDEVIYGMLLLVGMVFVTL, LFSFIMFVGRLISVFSLWYKG, ILLMLASLFGTYTWTTVLSMA, and IVLLCYLFIGYIISCYWGLFS. The region spanning 3837–3925 is the RdRp Nsp7 cofactor domain; that stretch reads SKLTDVKCAN…DYAKDNTVLQ (89 aa). The region spanning 3926-4122 is the RdRp Nsp8 cofactor domain; that stretch reads ALQSEFVNMA…YNEVSATVLQ (197 aa). The Nsp9 ssRNA-binding domain maps to 4123–4232; it reads NNELMPAKLK…GTISSTVRLQ (110 aa). The 138-residue stretch at 4233–4370 folds into the ExoN/MTase coactivator domain; that stretch reads AGTATEYASN…CVSTDTTVQS (138 aa). Cys-4306, Cys-4309, His-4315, Cys-4322, Cys-4348, Cys-4351, Cys-4359, and Cys-4361 together coordinate Zn(2+). 2 zinc fingers span residues 4306-4322 and 4348-4361; these read CIYCRARVEHPDVDGLC and CRVCGFWRDGSCSC.

It belongs to the coronaviruses polyprotein 1ab family. 3CL-PRO exists as monomer and homodimer. Eight copies of nsp7 and eight copies of nsp8 assemble to form a heterohexadecamer. Nsp9 is a dimer. Nsp10 forms a dodecamer. Post-translationally, specific enzymatic cleavages in vivo by its own proteases yield mature proteins. 3CL-PRO and PL-PRO proteinases are autocatalytically processed.

Its subcellular location is the host membrane. It is found in the host cytoplasm. It localises to the host perinuclear region. It catalyses the reaction Thiol-dependent hydrolysis of ester, thioester, amide, peptide and isopeptide bonds formed by the C-terminal Gly of ubiquitin (a 76-residue protein attached to proteins as an intracellular targeting signal).. The catalysed reaction is TSAVLQ-|-SGFRK-NH2 and SGVTFQ-|-GKFKK the two peptides corresponding to the two self-cleavage sites of the SARS 3C-like proteinase are the two most reactive peptide substrates. The enzyme exhibits a strong preference for substrates containing Gln at P1 position and Leu at P2 position.. It carries out the reaction a 5'-end diphospho-ribonucleoside in mRNA + GTP + H(+) = a 5'-end (5'-triphosphoguanosine)-ribonucleoside in mRNA + diphosphate. The papain-like proteinase 1 (PL1-PRO) and papain-like proteinase 2 (PL2-PRO) are responsible for the cleavages located at the N-terminus of the replicase polyprotein. In addition, PLP2 possesses a deubiquitinating/deISGylating activity and processes both 'Lys-48'- and 'Lys-63'-linked polyubiquitin chains from cellular substrates. Antagonizes innate immune induction of type I interferon by blocking the phosphorylation, dimerization and subsequent nuclear translocation of host IRF-3. Functionally, responsible for the majority of cleavages as it cleaves the C-terminus of replicase polyprotein at 11 sites. Recognizes substrates containing the core sequence [ILMVF]-Q-|-[SGACN]. Inhibited by the substrate-analog Cbz-Val-Asn-Ser-Thr-Leu-Gln-CMK. Also contains an ADP-ribose-1''-phosphate (ADRP)-binding function. Its function is as follows. Nsp7-nsp8 hexadecamer may possibly confer processivity to the polymerase, maybe by binding to dsRNA or by producing primers utilized by the latter. In terms of biological role, catalytic subunit of viral RNA capping enzyme which catalyzes the RNA guanylyltransferase reaction for genomic and sub-genomic RNAs. The kinase-like NiRAN domain of NSP12 transfers RNA to the amino terminus of NSP9, forming a covalent RNA-protein intermediate. Subsequently, the NiRAN domain transfers RNA to GDP, forming the core cap structure GpppA-RNA. The NSP14 and NSP16 methyltransferases then add methyl groups to form functional cap structures. Binds to the 40S ribosomal subunit and inhibits host translation. The nsp1-40S ribosome complex further induces an endonucleolytic cleavage near the 5'UTR of host mRNAs, targeting them for degradation. This inhibits the integrated stress response (ISR) in the infected cell by preventing EIF2S1/eIF2-alpha phosphorylation upstream of stress granule formation and depletes host G3BP1. By suppressing host gene expression, nsp1 facilitates efficient viral gene expression in infected cells and evasion from host immune response. This is Replicase polyprotein 1a from Human coronavirus OC43 (HCoV-OC43).